Here is a 196-residue protein sequence, read N- to C-terminus: Anthranilate synthase component 2 (196 aa).

In terms of domain architecture, Glutamine amidotransferase type-1 spans 1-195 (MLLLIDNYDS…LNTTRRLETA (195 aa)). 52 to 54 (GPC) provides a ligand contact to L-glutamine. Catalysis depends on cysteine 80, which acts as the Nucleophile; for GATase activity. L-glutamine-binding positions include glutamine 84 and 130-131 (SL). Catalysis depends on for GATase activity residues histidine 169 and glutamate 171.

Heterotetramer consisting of two non-identical subunits: a beta subunit (TrpG) and a large alpha subunit (TrpE).

The catalysed reaction is chorismate + L-glutamine = anthranilate + pyruvate + L-glutamate + H(+). It participates in amino-acid biosynthesis; L-tryptophan biosynthesis; L-tryptophan from chorismate: step 1/5. Its function is as follows. Part of a heterotetrameric complex that catalyzes the two-step biosynthesis of anthranilate, an intermediate in the biosynthesis of L-tryptophan. In the first step, the glutamine-binding beta subunit (TrpG) of anthranilate synthase (AS) provides the glutamine amidotransferase activity which generates ammonia as a substrate that, along with chorismate, is used in the second step, catalyzed by the large alpha subunit of AS (TrpE) to produce anthranilate. In the absence of TrpG, TrpE can synthesize anthranilate directly from chorismate and high concentrations of ammonia. Participates in the tryptophan-dependent indole-3-acetic acid production, which is a phytohormone released by A.brasilense. The polypeptide is Anthranilate synthase component 2 (trpG) (Azospirillum brasilense).